We begin with the raw amino-acid sequence, 317 residues long: Probable deoxyhypusine synthase 1 (317 aa).

The active-site Nucleophile is the Lys-285.

This sequence belongs to the deoxyhypusine synthase family. It depends on NAD(+) as a cofactor.

It catalyses the reaction [eIF5A protein]-L-lysine + spermidine = [eIF5A protein]-deoxyhypusine + propane-1,3-diamine. Its pathway is protein modification; eIF5A hypusination. Functionally, catalyzes the NAD-dependent oxidative cleavage of spermidine and the subsequent transfer of the butylamine moiety of spermidine to the epsilon-amino group of a specific lysine residue of the eIF-5A precursor protein to form the intermediate deoxyhypusine residue. The chain is Probable deoxyhypusine synthase 1 (dys1) from Methanosarcina acetivorans (strain ATCC 35395 / DSM 2834 / JCM 12185 / C2A).